The chain runs to 188 residues: Pyridoxal 5'-phosphate synthase subunit PdxT (188 aa).

47–49 (GES) serves as a coordination point for L-glutamine. The active-site Nucleophile is C79. L-glutamine-binding positions include R105 and 134 to 135 (IR). Residues H170 and E172 each act as charge relay system in the active site.

Belongs to the glutaminase PdxT/SNO family. In the presence of PdxS, forms a dodecamer of heterodimers. Only shows activity in the heterodimer.

It catalyses the reaction aldehydo-D-ribose 5-phosphate + D-glyceraldehyde 3-phosphate + L-glutamine = pyridoxal 5'-phosphate + L-glutamate + phosphate + 3 H2O + H(+). The catalysed reaction is L-glutamine + H2O = L-glutamate + NH4(+). It participates in cofactor biosynthesis; pyridoxal 5'-phosphate biosynthesis. Catalyzes the hydrolysis of glutamine to glutamate and ammonia as part of the biosynthesis of pyridoxal 5'-phosphate. The resulting ammonia molecule is channeled to the active site of PdxS. The chain is Pyridoxal 5'-phosphate synthase subunit PdxT from Listeria welshimeri serovar 6b (strain ATCC 35897 / DSM 20650 / CCUG 15529 / CIP 8149 / NCTC 11857 / SLCC 5334 / V8).